The following is an 858-amino-acid chain: DNA mismatch repair protein MutS (858 aa).

ATP is bound at residue 613–620; it reads GPNMAGKS.

The protein belongs to the DNA mismatch repair MutS family.

Functionally, this protein is involved in the repair of mismatches in DNA. It is possible that it carries out the mismatch recognition step. This protein has a weak ATPase activity. This chain is DNA mismatch repair protein MutS, found in Dehalococcoides mccartyi (strain ATCC BAA-2266 / KCTC 15142 / 195) (Dehalococcoides ethenogenes (strain 195)).